The chain runs to 175 residues: Large ribosomal subunit protein uL18 (175 aa).

The protein belongs to the universal ribosomal protein uL18 family. As to quaternary structure, part of the 50S ribosomal subunit. Contacts the 5S and 23S rRNAs.

Its function is as follows. This is one of the proteins that bind and probably mediate the attachment of the 5S RNA into the large ribosomal subunit, where it forms part of the central protuberance. The chain is Large ribosomal subunit protein uL18 from Methanoculleus marisnigri (strain ATCC 35101 / DSM 1498 / JR1).